The sequence spans 151 residues: Ribosome maturation factor RimP (151 aa).

Belongs to the RimP family.

It is found in the cytoplasm. Functionally, required for maturation of 30S ribosomal subunits. This chain is Ribosome maturation factor RimP, found in Persephonella marina (strain DSM 14350 / EX-H1).